The chain runs to 607 residues: Protease Do-like 2, chloroplastic (607 aa).

The disordered stretch occupies residues Ser41–Thr104. Over residues Pro87 to Thr104 the composition is skewed to basic and acidic residues. Residues Val118–Tyr317 form a serine protease region. Residues His159, Asp190, and Ser268 each act as charge relay system in the active site. The region spanning Leu308 to Asp403 is the PDZ domain.

Belongs to the peptidase S1C family.

The protein resides in the plastid. The protein localises to the chloroplast thylakoid membrane. Its function is as follows. Serine protease that performs the primary cleavage of the photodamaged D1 protein in plant photosystem II. In Arabidopsis thaliana (Mouse-ear cress), this protein is Protease Do-like 2, chloroplastic (DEGP2).